Here is a 472-residue protein sequence, read N- to C-terminus: MFKKVLVANRGEIACRVIRACKELGIQTVAIYNEIESTARHVKMADEAYMIGVNPLDTYLNAERIVDLALEVGAEAIHPGYGFLAENEHFARLCEEKGITFIGPHWKVIELMGDKARSKEVMKRAGVPTVPGSDGILKDVEEAKRIAKEIGYPVLLKASAGGGGRGIRICRNEEELVRNYENAYNEAVKAFGRGDLLLEKYIENPKHIEFQVLGDKYGNVIHLGERDCSIQRRNQKLVEIAPSLLLTPEQREYYGSLVVKAAKEIGYYSAGTMEFIADEKGNLYFIEMNTRIQVEHPVTEMITGVDIVKWQIRIAAGERLRYSQEDIRFNGYSIECRINAEDPKKGFAPSIGTIERYYVPGGFGIRVEHASSKGYEITPYYDSLIAKLIVWAPLWEVAVDRMRSALETYEISGVKTTIPLLINIMKDKDFRDGKFTTRYLEEHPHVFDYAEHRDKEDFVAFISAVIASYHGL.

In terms of domain architecture, Biotin carboxylation spans 1 to 445; sequence MFKKVLVANR…TTRYLEEHPH (445 aa). 2 residues coordinate ATP: Lys-115 and Glu-199. The 198-residue stretch at 119–316 folds into the ATP-grasp domain; the sequence is KEVMKRAGVP…IVKWQIRIAA (198 aa). Residue Arg-291 is part of the active site.

Heterohexadecamer of 8 large subunits and 8 small subunits. Mg(2+) serves as cofactor. The cofactor is Mn(2+). It depends on Co(2+) as a cofactor.

It carries out the reaction hydrogencarbonate + 2-oxoglutarate + ATP = (S)-oxalosuccinate + ADP + phosphate + H(+). This Hydrogenobacter thermophilus (strain DSM 6534 / IAM 12695 / TK-6) protein is 2-oxoglutarate carboxylase small subunit.